The primary structure comprises 75 residues: uncharacterized protein (75 aa).

The helical transmembrane segment at 4–26 threads the bilayer; that stretch reads PSLLFLGFSGVLAFGEVGWVGVY.

It localises to the membrane. This is an uncharacterized protein from Treponema pallidum (strain Nichols).